Reading from the N-terminus, the 761-residue chain is Semaphorin-4A (761 aa).

Residues 1 to 32 (MALPALGLDPWSLLGLFLFQLLQLLLPTTTAG) form the signal peptide. At 33–683 (GGGQGPMPRV…LAAQQSYWPH (651 aa)) the chain is on the extracellular side. Residues 36–494 (QGPMPRVRYY…FSGGVWRVPR (459 aa)) form the Sema domain. Cysteines 113 and 124 form a disulfide. 2 N-linked (GlcNAc...) asparagine glycosylation sites follow: Asn120 and Asn135. Cystine bridges form between Cys142–Cys151, Cys269–Cys379, and Cys293–Cys339. An N-linked (GlcNAc...) asparagine glycan is attached at Asn496. The 53-residue stretch at 496 to 548 (NCSVYESCVDCVLARDPHCAWDPESRTCCLLSAPNLNSWKQDMERGNPEWACA) folds into the PSI domain. 3 cysteine pairs are disulfide-bonded: Cys497–Cys514, Cys506–Cys523, and Cys580–Cys624. One can recognise an Ig-like C2-type domain in the interval 573–631 (NSILELPCPHLSALASYYWSHGPAAVPEASSTVYNGSLLLIVQDGVGGLYQCWATENGF). Asn607 carries N-linked (GlcNAc...) asparagine glycosylation. A helical transmembrane segment spans residues 684-704 (FVTVTVLFALVLSGALIILVA). The Cytoplasmic segment spans residues 705–761 (SPLRALRARGKVQGCETLRPGEKAPLSREQHLQSPKECRTSASDVDADNNCLGTEVA). A disordered region spans residues 722-749 (LRPGEKAPLSREQHLQSPKECRTSASDV). The span at 723-743 (RPGEKAPLSREQHLQSPKECR) shows a compositional bias: basic and acidic residues.

The protein belongs to the semaphorin family. Interacts with PLXNB1, PLXNB2, PLXNB3, PLXND1 and TIMD2.

The protein localises to the cell membrane. Its function is as follows. Cell surface receptor for PLXNB1, PLXNB2, PLXNB3 and PLXND1 that plays an important role in cell-cell signaling. Regulates glutamatergic and GABAergic synapse development. Promotes the development of inhibitory synapses in a PLXNB1-dependent manner and promotes the development of excitatory synapses in a PLXNB2-dependent manner. Plays a role in priming antigen-specific T-cells, promotes differentiation of Th1 T-helper cells, and thereby contributes to adaptive immunity. Promotes phosphorylation of TIMD2. Inhibits angiogenesis. Promotes axon growth cone collapse. Inhibits axonal extension by providing local signals to specify territories inaccessible for growing axons. The sequence is that of Semaphorin-4A (SEMA4A) from Homo sapiens (Human).